The sequence spans 53 residues: LTCLICPEKYCNKVHTCLNGEKIYDQRKYIRGCADTCPVRKPREIVECCSTDK.

Disulfide bonds link Cys6-Cys11, Cys17-Cys33, and Cys37-Cys48.

This sequence belongs to the three-finger toxin family. Ancestral subfamily. Orphan group II sub-subfamily. In terms of tissue distribution, expressed by the venom gland.

It localises to the secreted. Its function is as follows. Binds with low affinity and weakly inhibits muscle nicotinic acetylcholine receptor (nAChR). This Naja kaouthia (Monocled cobra) protein is Weak toxin NWT.